A 279-amino-acid chain; its full sequence is Pantothenate synthetase (279 aa).

Residue Met26–His33 coordinates ATP. His33 (proton donor) is an active-site residue. Gln57 contributes to the (R)-pantoate binding site. Residue Gln57 coordinates beta-alanine. Gly144 to Asp147 is a binding site for ATP. Gln150 serves as a coordination point for (R)-pantoate. ATP is bound at residue Leu181–Arg184.

Belongs to the pantothenate synthetase family. As to quaternary structure, homodimer.

It is found in the cytoplasm. It carries out the reaction (R)-pantoate + beta-alanine + ATP = (R)-pantothenate + AMP + diphosphate + H(+). It functions in the pathway cofactor biosynthesis; (R)-pantothenate biosynthesis; (R)-pantothenate from (R)-pantoate and beta-alanine: step 1/1. Its function is as follows. Catalyzes the condensation of pantoate with beta-alanine in an ATP-dependent reaction via a pantoyl-adenylate intermediate. In Janthinobacterium sp. (strain Marseille) (Minibacterium massiliensis), this protein is Pantothenate synthetase.